The following is a 22-amino-acid chain: Peptide PGLa-B1 (22 aa).

A Leucine amide modification is found at Leu22.

As to expression, expressed by the skin glands.

Its subcellular location is the secreted. Has antibacterial and antifungal activity. The sequence is that of Peptide PGLa-B1 from Xenopus borealis (Kenyan clawed frog).